A 252-amino-acid chain; its full sequence is Probable transcriptional regulatory protein Kole_1935 (252 aa).

Belongs to the TACO1 family.

It is found in the cytoplasm. This is Probable transcriptional regulatory protein Kole_1935 from Kosmotoga olearia (strain ATCC BAA-1733 / DSM 21960 / TBF 19.5.1).